The sequence spans 146 residues: Mite group 2 allergen Der p 2 (146 aa).

A signal peptide spans 1-17 (MMYKILCLSLLVAAVAR). Intrachain disulfides connect cysteine 25-cysteine 136, cysteine 38-cysteine 44, and cysteine 90-cysteine 95.

It belongs to the NPC2 family.

The protein resides in the secreted. This Dermatophagoides pteronyssinus (European house dust mite) protein is Mite group 2 allergen Der p 2 (DERP2).